Here is a 485-residue protein sequence, read N- to C-terminus: Beta-amyrin 28-monooxygenase CYP716A378 (485 aa).

A helical; Signal-anchor for type II membrane protein membrane pass occupies residues 3-23 (LFFICGLVLFSTLSLISLFLL). Residues Asn-25 and Asn-386 are each glycosylated (N-linked (GlcNAc...) asparagine). Cys-426 serves as a coordination point for heme.

It belongs to the cytochrome P450 family. It depends on heme as a cofactor. As to expression, mainly expressed in flowers and flower buds, to a lesser extent in young leaves and, at low levels, in old leaves, stems and roots.

The protein resides in the membrane. It catalyses the reaction beta-amyrin + 3 reduced [NADPH--hemoprotein reductase] + 3 O2 = oleanolate + 3 oxidized [NADPH--hemoprotein reductase] + 4 H2O + 4 H(+). Its pathway is secondary metabolite biosynthesis; terpenoid biosynthesis. Its function is as follows. Component of the oleanane-type triterpene saponins (e.g. saponarioside A and saponarioside B) biosynthetic pathway, leading to the production of natural products with detergent properties used as traditional sources of soap. An oxidoreductase that facilitates the oxidation of the methyl group to a carboxyl group at the C-28 position of beta-amyrin, resulting in the formation of oleanolate. This Saponaria officinalis (Common soapwort) protein is Beta-amyrin 28-monooxygenase CYP716A378.